A 360-amino-acid polypeptide reads, in one-letter code: MAAAAAAGAGPEMVRGQVFDVGPRYTNLSYIGEGAYGMVCSAYDNVNKVRVAIKKISPFEHQTYCQRTLREIKILLRFRHENIIGINDIIRAPTIEQMKDVYIVQDLMETDLYKLLKTQHLSNDHICYFLYQILRGLKYIHSANVLHRDLKPSNLLLNTTCDLKICDFGLARVADPDHDHTGFLTEYVATRWYRAPEIMLNSKGYTKSIDIWSVGCILAEMLSNRPIFPGKHYLDQLNHILGILGSPSQEDLNCIINLKARNYLLSLPHKNKVPWNRLFPNADSKALDLLDKMLTFNPHKRIEVEQALAHPYLEQYYDPSDEPIAEAPFKFDMELDDLPKEKLKELIFEETARFQPGYRS.

N-acetylalanine is present on Ala2. One can recognise a Protein kinase domain in the interval 25-313; the sequence is YTNLSYIGEG…VEQALAHPYL (289 aa). Phosphoserine; by SGK1 is present on Ser29. ATP contacts are provided by residues 31–39 and Lys54; that span reads IGEGAYGMV. The active-site Proton acceptor is the Asp149. Residue Thr185 is modified to Phosphothreonine; by MAP2K1 and MAP2K2. Positions 185-187 match the TXY motif; sequence TEY. Tyr187 is modified (phosphotyrosine; by MAP2K1 and MAP2K2). The residue at position 190 (Thr190) is a Phosphothreonine; by autocatalysis. Phosphoserine occurs at positions 246 and 248. A DNA-binding region spans residues 259-277; the sequence is KARNYLLSLPHKNKVPWNR. Ser284 is subject to Phosphoserine. A Cytoplasmic retention motif motif is present at residues 318–322; that stretch reads DPSDE. The Nuclear translocation motif signature appears at 327–333; the sequence is APFKFDM.

It belongs to the protein kinase superfamily. CMGC Ser/Thr protein kinase family. MAP kinase subfamily. In terms of assembly, binds both upstream activators and downstream substrates in multimolecular complexes. This interaction inhibits its tyrosine-kinase activity. Interacts with ADAM15, ARHGEF2, ARRB2, DAPK1 (via death domain), HSF4, IER3, IPO7, NISCH, SGK1, and isoform 1 of NEK2. Interacts (via phosphorylated form) with TPR (via C-terminal region and phosphorylated form); the interaction requires dimerization of MAPK1/ERK2 and increases following EGF stimulation. Interacts with MAP2K1. Interacts with DUSP6. Interacts (phosphorylated form) with CAV2 ('Tyr-19'-phosphorylated form); the interaction, promoted by insulin, leads to nuclear location and MAPK1 activation. Interacts with MORG1, PEA15 and MKNK2. MKNK2 isoform 1 binding prevents from dephosphorylation and inactivation. Interacts with DCC. The phosphorylated form interacts with PML (isoform PML-4). Interacts with STYX. Interacts with CDK2AP2. Interacts with CAVIN4. Interacts with DUSP7; the interaction enhances DUSP7 phosphatase activity. Interacts with GIT1; this interaction is necessary for MAPK1 localization to focal adhesions. Interacts with ZNF263. Interacts with phosphoglycerate kinase PGK1; the interaction is direct, occurs under hypoxic conditions, and promotes interaction between PGK1 and PIN1. As to quaternary structure, (Microbial infection) Interacts with HIV-1 Nef through its SH3 domain. Requires Mg(2+) as cofactor. In terms of processing, phosphorylated upon KIT and FLT3 signaling. Dually phosphorylated on Thr-185 and Tyr-187, which activates the enzyme. Undergoes regulatory phosphorylation on additional residues such as Ser-246 and Ser-248 in the kinase insert domain (KID) These phosphorylations, which are probably mediated by more than one kinase, are important for binding of MAPK1/ERK2 to importin-7 (IPO7) and its nuclear translocation. In addition, autophosphorylation of Thr-190 was shown to affect the subcellular localization of MAPK1/ERK2 as well. Ligand-activated ALK induces tyrosine phosphorylation. Dephosphorylated by PTPRJ at Tyr-187. Phosphorylation on Ser-29 by SGK1 results in its activation by enhancing its interaction with MAP2K1/MEK1 and MAP2K2/MEK2. DUSP3 and DUSP6 dephosphorylate specifically MAPK1/ERK2 and MAPK3/ERK1 whereas DUSP9 dephosphorylates a broader range of MAPKs. Dephosphorylated by DUSP1 and DUSP2 at Thr-185 and Tyr-187. ISGylated. Post-translationally, ubiquitinated by TRIM15 via 'Lys-63'-linked ubiquitination; leading to activation. Deubiquitinated by CYLD.

Its subcellular location is the cytoplasm. The protein localises to the cytoskeleton. It localises to the spindle. It is found in the nucleus. The protein resides in the microtubule organizing center. Its subcellular location is the centrosome. The protein localises to the membrane. It localises to the caveola. It is found in the cell junction. The protein resides in the focal adhesion. It carries out the reaction L-seryl-[protein] + ATP = O-phospho-L-seryl-[protein] + ADP + H(+). It catalyses the reaction L-threonyl-[protein] + ATP = O-phospho-L-threonyl-[protein] + ADP + H(+). With respect to regulation, phosphorylated by MAP2K1/MEK1 and MAP2K2/MEK2 on Thr-185 and Tyr-187 in response to external stimuli like insulin or NGF. Both phosphorylations are required for activity. This phosphorylation causes dramatic conformational changes, which enable full activation and interaction of MAPK1/ERK2 with its substrates. Phosphorylation on Ser-29 by SGK1 results in its activation by enhancing its interaction with MAP2K1/MEK1 and MAP2K2/MEK2. Dephosphorylated and inactivated by DUSP1, DUSP3, DUSP6 and DUSP9. Inactivated by pyrimidylpyrrole inhibitors. In terms of biological role, serine/threonine kinase which acts as an essential component of the MAP kinase signal transduction pathway. MAPK1/ERK2 and MAPK3/ERK1 are the 2 MAPKs which play an important role in the MAPK/ERK cascade. They participate also in a signaling cascade initiated by activated KIT and KITLG/SCF. Depending on the cellular context, the MAPK/ERK cascade mediates diverse biological functions such as cell growth, adhesion, survival and differentiation through the regulation of transcription, translation, cytoskeletal rearrangements. The MAPK/ERK cascade also plays a role in initiation and regulation of meiosis, mitosis, and postmitotic functions in differentiated cells by phosphorylating a number of transcription factors. About 160 substrates have already been discovered for ERKs. Many of these substrates are localized in the nucleus, and seem to participate in the regulation of transcription upon stimulation. However, other substrates are found in the cytosol as well as in other cellular organelles, and those are responsible for processes such as translation, mitosis and apoptosis. Moreover, the MAPK/ERK cascade is also involved in the regulation of the endosomal dynamics, including lysosome processing and endosome cycling through the perinuclear recycling compartment (PNRC); as well as in the fragmentation of the Golgi apparatus during mitosis. The substrates include transcription factors (such as ATF2, BCL6, ELK1, ERF, FOS, HSF4 or SPZ1), cytoskeletal elements (such as CANX, CTTN, GJA1, MAP2, MAPT, PXN, SORBS3 or STMN1), regulators of apoptosis (such as BAD, BTG2, CASP9, DAPK1, IER3, MCL1 or PPARG), regulators of translation (such as EIF4EBP1 and FXR1) and a variety of other signaling-related molecules (like ARHGEF2, DCC, FRS2 or GRB10). Protein kinases (such as RAF1, RPS6KA1/RSK1, RPS6KA3/RSK2, RPS6KA2/RSK3, RPS6KA6/RSK4, SYK, MKNK1/MNK1, MKNK2/MNK2, RPS6KA5/MSK1, RPS6KA4/MSK2, MAPKAPK3 or MAPKAPK5) and phosphatases (such as DUSP1, DUSP4, DUSP6 or DUSP16) are other substrates which enable the propagation the MAPK/ERK signal to additional cytosolic and nuclear targets, thereby extending the specificity of the cascade. Mediates phosphorylation of TPR in response to EGF stimulation. May play a role in the spindle assembly checkpoint. Phosphorylates PML and promotes its interaction with PIN1, leading to PML degradation. Phosphorylates CDK2AP2. Phosphorylates phosphoglycerate kinase PGK1 under hypoxic conditions to promote its targeting to the mitochondrion and suppress the formation of acetyl-coenzyme A from pyruvate. Functionally, acts as a transcriptional repressor. Binds to a [GC]AAA[GC] consensus sequence. Repress the expression of interferon gamma-induced genes. Seems to bind to the promoter of CCL5, DMP1, IFIH1, IFITM1, IRF7, IRF9, LAMP3, OAS1, OAS2, OAS3 and STAT1. Transcriptional activity is independent of kinase activity. The polypeptide is Mitogen-activated protein kinase 1 (Homo sapiens (Human)).